A 235-amino-acid chain; its full sequence is Large ribosomal subunit protein uL3 (235 aa).

Belongs to the universal ribosomal protein uL3 family. Part of the 50S ribosomal subunit. Forms a cluster with proteins L14 and L19.

In terms of biological role, one of the primary rRNA binding proteins, it binds directly near the 3'-end of the 23S rRNA, where it nucleates assembly of the 50S subunit. The polypeptide is Large ribosomal subunit protein uL3 (Frankia casuarinae (strain DSM 45818 / CECT 9043 / HFP020203 / CcI3)).